The sequence spans 213 residues: Ras-related protein Rab-39B (213 aa).

Positions 17, 20, 21, 22, 23, 37, and 40 each coordinate GTP. S22 is a Mg(2+) binding site. Residues 35 to 43 (QVSDPTVGV) form a switch-I region. Positions 40 and 64 each coordinate Mg(2+). Positions 67, 123, 124, 126, 154, and 155 each coordinate GTP. The segment at 67-83 (GQERFRSITRAYYRNSV) is switch-II. Residue S201 is modified to Phosphoserine. S-geranylgeranyl cysteine attachment occurs at residues C211 and C213. Residue C213 is modified to Cysteine methyl ester.

The protein belongs to the small GTPase superfamily. Rab family. Interacts (GDP-bound) with C9orf72; C9orf72 in complex with SMCR8 acts as a GEF for RAB39B. Interacts (in GTP-bound form) with PICK1 (via PDZ domain); a PICK1 homodimer may allow simultaneous association of RAB39B and GRIA2 to PICK1 which is involved in GRIA2 trafficking. Interacts with isoform c of RASSF1; the interaction is strong. Interacts with isoform a of RASSF1; the interaction is weak. Interacts with the DLG4/PSD-95. Interacts (GTP-bound) with HOPS complex components VPS39 and VPS41. Mg(2+) serves as cofactor. Highly expressed in the brain.

Its subcellular location is the cell membrane. The protein resides in the cytoplasmic vesicle membrane. The protein localises to the golgi apparatus. It localises to the cytoplasmic vesicle. It is found in the autophagosome membrane. Its subcellular location is the autolysosome membrane. It catalyses the reaction GTP + H2O = GDP + phosphate + H(+). Regulated by guanine nucleotide exchange factors (GEFs) including C9orf72-SMCR8 complex, which promote the exchange of bound GDP for free GTP. Regulated by GTPase activating proteins (GAPs) which increase the GTP hydrolysis activity. Inhibited by GDP dissociation inhibitors (GDIs). Functionally, the small GTPases Rab are key regulators of intracellular membrane trafficking, from the formation of transport vesicles to their fusion with membranes. Rabs cycle between an inactive GDP-bound form and an active GTP-bound form that is able to recruit to membranes different sets of downstream effectors directly responsible for vesicle formation, movement, tethering and fusion. RAB39B is involved in autophagy and may function in autophagosome formation. Binds downstream effector PICK1 to ensure selectively GRIA2 exit from the endoplasmic reticulum to the Golgi and to regulate AMPAR composition at the post-synapses and thus synaptic transmission. May regulate the homeostasis of SNCA/alpha-synuclein. This is Ras-related protein Rab-39B from Homo sapiens (Human).